Here is a 282-residue protein sequence, read N- to C-terminus: Deoxyribonuclease-1 (282 aa).

The first 22 residues, 1-22, serve as a signal peptide directing secretion; it reads MRGTRLMGLLLALAGLLQLGLS. N40 carries an N-linked (GlcNAc...) asparagine glycan. E100 is an active-site residue. Residues C123 and C126 are joined by a disulfide bond. The active site involves H156. An intrachain disulfide couples C195 to C231.

This sequence belongs to the DNase I family. Ca(2+) is required as a cofactor. Mg(2+) serves as cofactor. In terms of processing, the only differences between the A and B forms and the C and D forms are in the compositions of the carbohydrate bound to Asn-40.

It is found in the secreted. The protein localises to the zymogen granule. Its subcellular location is the nucleus envelope. It catalyses the reaction Endonucleolytic cleavage to 5'-phosphodinucleotide and 5'-phosphooligonucleotide end-products.. Functionally, serum endocuclease secreted into body fluids by a wide variety of exocrine and endocrine organs. Expressed by non-hematopoietic tissues and preferentially cleaves protein-free DNA. Among other functions, seems to be involved in cell death by apoptosis. Binds specifically to G-actin and blocks actin polymerization. Together with DNASE1L3, plays a key role in degrading neutrophil extracellular traps (NETs). NETs are mainly composed of DNA fibers and are released by neutrophils to bind pathogens during inflammation. Degradation of intravascular NETs by DNASE1 and DNASE1L3 is required to prevent formation of clots that obstruct blood vessels and cause organ damage following inflammation. This is Deoxyribonuclease-1 (DNASE1) from Bos taurus (Bovine).